Here is a 1132-residue protein sequence, read N- to C-terminus: Myosin-binding protein C, fast-type (1132 aa).

Residues 1-59 (MPEPSKAAPKKEAKKKEEKKEEKKEAPPPQEHKDEAPDDVHPPETPDPEGLFLSKPQNV) are disordered. Basic and acidic residues predominate over residues 9–44 (PKKEAKKKEEKKEEKKEAPPPQEHKDEAPDDVHPPE). Ig-like C2-type domains lie at 48 to 149 (PEGL…SIDV), 249 to 338 (SEAF…VKEP), 339 to 429 (PVTV…VEEK), 430 to 530 (QLEV…KQEP), and 531 to 630 (PKIH…VVDV). 2 Fibronectin type-III domains span residues 633–729 (PPQS…IAPT) and 731–826 (EPTH…IREI). The 94-residue stretch at 830–923 (PKIRLPRHLR…ATLRLRVVER (94 aa)) folds into the Ig-like C2-type 6 domain. A Fibronectin type-III 3 domain is found at 926 to 1022 (PPQAVRVMEV…HNTARIAKEG (97 aa)). The region spanning 1039-1132 (PQFLTPLVDR…ECRLDVRVPQ (94 aa)) is the Ig-like C2-type 7 domain.

Belongs to the immunoglobulin superfamily. MyBP family.

In terms of biological role, thick filament-associated protein located in the crossbridge region of vertebrate striated muscle a bands. In vitro it binds MHC, F-actin and native thin filaments, and modifies the activity of actin-activated myosin ATPase. It may modulate muscle contraction or may play a more structural role. This chain is Myosin-binding protein C, fast-type (MYBPC2), found in Gallus gallus (Chicken).